A 1141-amino-acid polypeptide reads, in one-letter code: MSKKFAEYSQFDLSKVNKDVLKKWDENQVFAKSMTEREGCPSFVFFEGPPSANGMPGIHHVMARSIKDIFCRYKTMKGYQVKRKAGWDTHGLPVELGVEKSLGITKEDIGKTISVAEYNAHCRQDVMKFTKEWEDLTHKMGYWVDMKHPYITYDNRYIETLWWLLKQLYKKGLLYKGYTIQPYSPAAGTGLSSHELNQPGCYRDVKDTTVVAQFKMKNPKPEMAQWGTPYFLAWTTTPWTLPSNTALCVGPKIDYVAVQSYNAYTGQPITVVLAKALLNAHFNPKAAELKLEDYKAGDKLVPFKVIAEYKGPDLVGMEYEQLIPWVNPGEGAFRVILGDYVTTEDGTGIVHIAPTFGADDAQVAKAAGIPPLQLVNKKGELRPMVDLTGKFYTLDELDEDFIKQRVNIDLYKEYAGRFVKNAYDPNLSDQDESLDVSICMMMKVNNQAFKIEKHVHNYPHCWRTDKPVLYYPLDSWFIRSTACKERMIELNKTINWKPESTGTGRFGKWLENLNDWNLSRSRYWGTPLPIWRTEDNSDEKCIESVEELYNEIEKSVAAGYMQSNPYKDKGFVPGEYNEENYNKIDLHRPYVDDIILVSKDGKPMKREADLIDVWFDSGAMPYAQIHYPFENKELLDSHQVYPADFIAEGVDQTRGWFFTLHAIATMVFDSVSYKAVISNGLVLDKNGNKMSKRLGNAVDPFSTIEQYGSDPLRWYMITNSSPWDNLKFDVDGIEEVRRKFFGTLYNTYSFFALYANVDGFEYKEADLPMNERPEIDRWILSVLNTLVKEVDTCYNEYEPTKAGRLISDFVNDNLSNWYVRLNRKRFWGGGFTQDKLSAYQTLYTCLETVAKLMAPIAPFYADRLYSDLIGVTGRDNVVSVHLAKFPEYNEKMVDKELEAQMQMAQDVTSMVLALRRKVNIKVRQPLQCIMIPVVDEVQKAHIEAVKALIMSEVNVKEIKFVDGAAGVLVKKVKCDFKKLGPKFGKQMKAVAAAVAEMSQEAIAELEKNGKYTFDLGGAEAVIESADVEIFSEDIPGWLVANEGKLTVALEVTVTDELRREGIARELVNRIQNIRKSSGFEITDKIKLTLSKNPQTDDAVNEYNSYICNQVLGTSLTLADEVKDGTELNFDDFSLFVNVVKE.

Residues 50–60 carry the 'HIGH' region motif; it reads PSANGMPGIHH. The 'KMSKS' region signature appears at 689-693; the sequence is KMSKR. Lys-692 serves as a coordination point for ATP.

Belongs to the class-I aminoacyl-tRNA synthetase family. IleS type 2 subfamily. In terms of assembly, monomer. Zn(2+) serves as cofactor.

It is found in the cytoplasm. The catalysed reaction is tRNA(Ile) + L-isoleucine + ATP = L-isoleucyl-tRNA(Ile) + AMP + diphosphate. Functionally, catalyzes the attachment of isoleucine to tRNA(Ile). As IleRS can inadvertently accommodate and process structurally similar amino acids such as valine, to avoid such errors it has two additional distinct tRNA(Ile)-dependent editing activities. One activity is designated as 'pretransfer' editing and involves the hydrolysis of activated Val-AMP. The other activity is designated 'posttransfer' editing and involves deacylation of mischarged Val-tRNA(Ile). The sequence is that of Isoleucine--tRNA ligase from Bacteroides fragilis (strain YCH46).